Consider the following 460-residue polypeptide: V-type ATP synthase beta chain (460 aa).

The protein belongs to the ATPase alpha/beta chains family.

Functionally, produces ATP from ADP in the presence of a proton gradient across the membrane. The V-type beta chain is a regulatory subunit. This is V-type ATP synthase beta chain from Clostridium perfringens (strain ATCC 13124 / DSM 756 / JCM 1290 / NCIMB 6125 / NCTC 8237 / Type A).